A 383-amino-acid polypeptide reads, in one-letter code: MPSGGRGRPRLQVGERSLLERPSPPKRRLIPRAQLLPQLLLALTVASVFYTIWRIWHSQTEELPLGRELRGPLIGSLPEARVRRVVGQLDPHRLWNTFLRPLLVVRTPGSPGNLQVRKFLEATLRTLSAGWHIELDSFTASTPVGPLDFSNVVATLDPGAARHLTLACHYDSKLFPSDSAPFVGATDSAVPCSLLLELAQALDQELGKAKERAAPMTLQLIFLDGEEALKQWGPKDSLYGSRHLAQLMESTPHGLGSTRIQAIELFMLLDLLGAPNPTFYSHFPRTARWFHRLRSIEKRLHRLNLLQSHPWEVMYFQTGEPPGSVEDDHIPFLRRGVPVLHLIATPFPSVWHTSDDSEANLHPPTVHNLSRILAVFLAEYLGL.

Residues 1–25 are disordered; the sequence is MPSGGRGRPRLQVGERSLLERPSPP. The helical transmembrane segment at 35-57 threads the bilayer; that stretch reads LLPQLLLALTVASVFYTIWRIWH. A disulfide bridge links Cys-168 with Cys-192. A Zn(2+)-binding site is contributed by Asp-187. The active-site Proton acceptor is Glu-226. Glu-227 contributes to the Zn(2+) binding site. The Proton acceptor role is filled by Asp-270. Residue His-352 participates in Zn(2+) binding.

It belongs to the glutaminyl-peptide cyclotransferase family.

The protein resides in the golgi apparatus membrane. It carries out the reaction N-terminal L-glutaminyl-[peptide] = N-terminal 5-oxo-L-prolyl-[peptide] + NH4(+). Functionally, responsible for the biosynthesis of pyroglutamyl peptides. The polypeptide is Glutaminyl-peptide cyclotransferase-like protein (QPCTL) (Bos taurus (Bovine)).